The primary structure comprises 301 residues: Lipoyl synthase (301 aa).

7 residues coordinate [4Fe-4S] cluster: cysteine 53, cysteine 58, cysteine 64, cysteine 79, cysteine 83, cysteine 86, and serine 290. A Radical SAM core domain is found at 65–279 (WSRKTATYML…RIYGKSIGFK (215 aa)).

The protein belongs to the radical SAM superfamily. Lipoyl synthase family. [4Fe-4S] cluster serves as cofactor.

It localises to the cytoplasm. The enzyme catalyses [[Fe-S] cluster scaffold protein carrying a second [4Fe-4S](2+) cluster] + N(6)-octanoyl-L-lysyl-[protein] + 2 oxidized [2Fe-2S]-[ferredoxin] + 2 S-adenosyl-L-methionine + 4 H(+) = [[Fe-S] cluster scaffold protein] + N(6)-[(R)-dihydrolipoyl]-L-lysyl-[protein] + 4 Fe(3+) + 2 hydrogen sulfide + 2 5'-deoxyadenosine + 2 L-methionine + 2 reduced [2Fe-2S]-[ferredoxin]. It participates in protein modification; protein lipoylation via endogenous pathway; protein N(6)-(lipoyl)lysine from octanoyl-[acyl-carrier-protein]: step 2/2. Catalyzes the radical-mediated insertion of two sulfur atoms into the C-6 and C-8 positions of the octanoyl moiety bound to the lipoyl domains of lipoate-dependent enzymes, thereby converting the octanoylated domains into lipoylated derivatives. The sequence is that of Lipoyl synthase from Leptospira interrogans serogroup Icterohaemorrhagiae serovar Lai (strain 56601).